A 150-amino-acid chain; its full sequence is Small ribosomal subunit protein uS11x (150 aa).

Belongs to the universal ribosomal protein uS11 family.

It is found in the cytoplasm. The sequence is that of Small ribosomal subunit protein uS11x (RPS14C) from Arabidopsis thaliana (Mouse-ear cress).